The following is a 328-amino-acid chain: tRNA N6-adenosine threonylcarbamoyltransferase (328 aa).

2 residues coordinate Fe cation: His-111 and His-115. Residues 133–137, Asp-166, Gly-179, Asp-183, and Asn-270 contribute to the substrate site; that span reads LVSGG. Residue Asp-296 coordinates Fe cation.

Belongs to the KAE1 / TsaD family. Fe(2+) is required as a cofactor.

The protein resides in the cytoplasm. It carries out the reaction L-threonylcarbamoyladenylate + adenosine(37) in tRNA = N(6)-L-threonylcarbamoyladenosine(37) in tRNA + AMP + H(+). Its function is as follows. Required for the formation of a threonylcarbamoyl group on adenosine at position 37 (t(6)A37) in tRNAs that read codons beginning with adenine. Is involved in the transfer of the threonylcarbamoyl moiety of threonylcarbamoyl-AMP (TC-AMP) to the N6 group of A37, together with TsaE and TsaB. TsaD likely plays a direct catalytic role in this reaction. The protein is tRNA N6-adenosine threonylcarbamoyltransferase of Phytoplasma australiense.